We begin with the raw amino-acid sequence, 456 residues long: Phosphomethylpyrimidine synthase (456 aa).

Residues Asn-80, Met-109, Tyr-139, His-175, 195–197 (SRG), 236–239 (DSLR), and Glu-275 contribute to the substrate site. His-279 is a binding site for Zn(2+). Tyr-302 is a binding site for substrate. Residue His-343 participates in Zn(2+) binding. Residues Cys-423, Cys-426, and Cys-431 each contribute to the [4Fe-4S] cluster site.

It belongs to the ThiC family. [4Fe-4S] cluster serves as cofactor.

It carries out the reaction 5-amino-1-(5-phospho-beta-D-ribosyl)imidazole + S-adenosyl-L-methionine = 4-amino-2-methyl-5-(phosphooxymethyl)pyrimidine + CO + 5'-deoxyadenosine + formate + L-methionine + 3 H(+). It participates in cofactor biosynthesis; thiamine diphosphate biosynthesis. Functionally, catalyzes the synthesis of the hydroxymethylpyrimidine phosphate (HMP-P) moiety of thiamine from aminoimidazole ribotide (AIR) in a radical S-adenosyl-L-methionine (SAM)-dependent reaction. This Prochlorococcus marinus subsp. pastoris (strain CCMP1986 / NIES-2087 / MED4) protein is Phosphomethylpyrimidine synthase.